A 314-amino-acid chain; its full sequence is Acetyl-coenzyme A carboxylase carboxyl transferase subunit alpha (314 aa).

Residues 32-289 (EIDMLEASLE…KSAFVAQLDS (258 aa)) form the CoA carboxyltransferase C-terminal domain.

The protein belongs to the AccA family. As to quaternary structure, acetyl-CoA carboxylase is a heterohexamer composed of biotin carboxyl carrier protein (AccB), biotin carboxylase (AccC) and two subunits each of ACCase subunit alpha (AccA) and ACCase subunit beta (AccD).

It localises to the cytoplasm. It catalyses the reaction N(6)-carboxybiotinyl-L-lysyl-[protein] + acetyl-CoA = N(6)-biotinyl-L-lysyl-[protein] + malonyl-CoA. Its pathway is lipid metabolism; malonyl-CoA biosynthesis; malonyl-CoA from acetyl-CoA: step 1/1. Component of the acetyl coenzyme A carboxylase (ACC) complex. First, biotin carboxylase catalyzes the carboxylation of biotin on its carrier protein (BCCP) and then the CO(2) group is transferred by the carboxyltransferase to acetyl-CoA to form malonyl-CoA. The sequence is that of Acetyl-coenzyme A carboxylase carboxyl transferase subunit alpha from Staphylococcus aureus (strain JH9).